Reading from the N-terminus, the 156-residue chain is Beta-defensin 125 (156 aa).

The first 20 residues, 1–20 (MNILMLTFIICGLLTRVTKG), serve as a signal peptide directing secretion. 3 disulfides stabilise this stretch: Cys-27-Cys-55, Cys-35-Cys-49, and Cys-39-Cys-56. The propeptide occupies 68 to 156 (PAFPVIHLED…PPSQTALTHN (89 aa)). The interval 108-156 (GETMTPETNTPETTMPPSEATTPETTMPPSETATSETMPPPSQTALTHN) is disordered. The span at 109-144 (ETMTPETNTPETTMPPSEATTPETTMPPSETATSET) shows a compositional bias: low complexity.

This sequence belongs to the beta-defensin family.

It is found in the secreted. In terms of biological role, has antibacterial activity. The chain is Beta-defensin 125 (DEFB125) from Homo sapiens (Human).